Here is a 413-residue protein sequence, read N- to C-terminus: Argininosuccinate synthase (413 aa).

22–30 (AYSGGLDTS) is an ATP binding site. L-citrulline-binding residues include tyrosine 100 and serine 105. Glycine 130 provides a ligand contact to ATP. L-aspartate contacts are provided by threonine 132, asparagine 136, and aspartate 137. Position 136 (asparagine 136) interacts with L-citrulline. Residues arginine 140, serine 189, serine 198, glutamate 274, and tyrosine 286 each coordinate L-citrulline.

The protein belongs to the argininosuccinate synthase family. Type 1 subfamily. As to quaternary structure, homotetramer.

The protein resides in the cytoplasm. The enzyme catalyses L-citrulline + L-aspartate + ATP = 2-(N(omega)-L-arginino)succinate + AMP + diphosphate + H(+). It participates in amino-acid biosynthesis; L-arginine biosynthesis; L-arginine from L-ornithine and carbamoyl phosphate: step 2/3. The sequence is that of Argininosuccinate synthase from Endomicrobium trichonymphae.